The chain runs to 193 residues: DNA damage-inducible transcript 4-like protein (193 aa).

It belongs to the DDIT4 family. Expressed in heart, skeletal muscle and testis.

Its subcellular location is the cytoplasm. In terms of biological role, inhibits cell growth by regulating the TOR signaling pathway upstream of the TSC1-TSC2 complex and downstream of AKT1. The protein is DNA damage-inducible transcript 4-like protein (Ddit4l) of Rattus norvegicus (Rat).